Consider the following 464-residue polypeptide: tRNA modification GTPase MnmE (464 aa).

The (6S)-5-formyl-5,6,7,8-tetrahydrofolate site is built by arginine 27, glutamate 90, and lysine 129. Residues 222–384 (GIALVLAGSV…LYDKIRSLTC (163 aa)) form the TrmE-type G domain. GTP-binding positions include 232–237 (NVGKSS), 251–257 (SSYAGTT), and 276–279 (DTAG). The Mg(2+) site is built by serine 236 and threonine 257. Lysine 464 is a binding site for (6S)-5-formyl-5,6,7,8-tetrahydrofolate.

This sequence belongs to the TRAFAC class TrmE-Era-EngA-EngB-Septin-like GTPase superfamily. TrmE GTPase family. In terms of assembly, homodimer. Heterotetramer of two MnmE and two MnmG subunits. Requires K(+) as cofactor.

It is found in the cytoplasm. Its function is as follows. Exhibits a very high intrinsic GTPase hydrolysis rate. Involved in the addition of a carboxymethylaminomethyl (cmnm) group at the wobble position (U34) of certain tRNAs, forming tRNA-cmnm(5)s(2)U34. This Borrelia turicatae (strain 91E135) protein is tRNA modification GTPase MnmE.